Consider the following 1061-residue polypeptide: Bifunctional cytochrome P450/NADPH--P450 reductase 1 (1061 aa).

The interval 1-475 is cytochrome P450; that stretch reads MKETSPIPQP…AEKAAPDEQK (475 aa). Cys403 lines the heme pocket. Residues 476–1061 are NADPH--P450 reductase; the sequence is EKTEAKGASV…MYAKDVWAGI (586 aa). A Flavodoxin-like domain is found at 493–632; it reads LLVLYGSDTG…QLDEWKKSMW (140 aa). FMN-binding positions include 499–504, 546–549, 580–582, and 588–590; these read SDTGTA, SYNG, CGD, and TYQ. An FAD-binding FR-type domain is found at 671 to 904; it reads YEASHASIAE…RTPESRFQLP (234 aa).

In the N-terminal section; belongs to the cytochrome P450 family. The cofactor is FAD. FMN serves as cofactor. Requires heme b as cofactor.

The protein localises to the cytoplasm. The catalysed reaction is an organic molecule + reduced [NADPH--hemoprotein reductase] + O2 = an alcohol + oxidized [NADPH--hemoprotein reductase] + H2O + H(+). The enzyme catalyses 2 oxidized [cytochrome P450] + NADPH = 2 reduced [cytochrome P450] + NADP(+) + H(+). Functionally, functions as a fatty acid monooxygenase. Catalyzes hydroxylation of a range of long-chain fatty acids, with a preference for long-chain unsaturated and branched-chain fatty acids over saturated fatty acids. Hydroxylation of myristic acid occurs mainly at the omega-2 position. Also displays a NADPH-dependent reductase activity in the C-terminal domain, which allows electron transfer from NADPH to the heme iron of the cytochrome P450 N-terminal domain. Is also able to catalyze efficient oxidation of sodium dodecyl sulfate (SDS). The chain is Bifunctional cytochrome P450/NADPH--P450 reductase 1 from Bacillus subtilis (strain 168).